The primary structure comprises 99 residues: Large ribosomal subunit protein uL23 (99 aa).

Belongs to the universal ribosomal protein uL23 family. Part of the 50S ribosomal subunit. Contacts protein L29, and trigger factor when it is bound to the ribosome.

One of the early assembly proteins it binds 23S rRNA. One of the proteins that surrounds the polypeptide exit tunnel on the outside of the ribosome. Forms the main docking site for trigger factor binding to the ribosome. This Rhodopseudomonas palustris (strain BisB18) protein is Large ribosomal subunit protein uL23.